Consider the following 602-residue polypeptide: Aspartate--tRNA(Asp/Asn) ligase (602 aa).

Position 176 (E176) interacts with L-aspartate. The interval Q200–K203 is aspartate. L-aspartate is bound by residues R222 and H452. R222 to E224 provides a ligand contact to ATP. E490 is an ATP binding site. An L-aspartate-binding site is contributed by R497. G542–R545 serves as a coordination point for ATP.

This sequence belongs to the class-II aminoacyl-tRNA synthetase family. Type 1 subfamily. In terms of assembly, homodimer.

The protein localises to the cytoplasm. The enzyme catalyses tRNA(Asx) + L-aspartate + ATP = L-aspartyl-tRNA(Asx) + AMP + diphosphate. Functionally, aspartyl-tRNA synthetase with relaxed tRNA specificity since it is able to aspartylate not only its cognate tRNA(Asp) but also tRNA(Asn). Reaction proceeds in two steps: L-aspartate is first activated by ATP to form Asp-AMP and then transferred to the acceptor end of tRNA(Asp/Asn). This chain is Aspartate--tRNA(Asp/Asn) ligase, found in Rickettsia africae (strain ESF-5).